The chain runs to 926 residues: ABC transporter A family member 6 (926 aa).

Transmembrane regions (helical) follow at residues 34–54 (LIVI…VFDS), 336–356 (ASLI…PVIL), 389–409 (FLAI…AIGL), 418–438 (TIQF…AFLV), 451–471 (VAYI…QFLI), and 525–545 (DEVF…TYYI). An ABC transporter domain is found at 610–847 (IVCDNLKKVY…YGGSYVLTIT (238 aa)). 648–655 (GPNGAGKT) contacts ATP.

The protein belongs to the ABC transporter superfamily. ABCA family. CPR flippase (TC 3.A.1.211) subfamily.

The protein resides in the membrane. In Arabidopsis thaliana (Mouse-ear cress), this protein is ABC transporter A family member 6 (ABCA6).